The following is a 520-amino-acid chain: EGF domain-specific O-linked N-acetylglucosamine transferase (520 aa).

The signal sequence occupies residues 1–16 (MPILPILIGILHLSLA). Asn52, Asn176, and Asn250 each carry an N-linked (GlcNAc...) asparagine glycan. The short motif at 292–294 (DVE) is the Required for optimal activity element. The N-linked (GlcNAc...) asparagine glycan is linked to Asn479. The Prevents secretion from ER signature appears at 517–520 (RNEL).

It depends on a divalent metal cation as a cofactor.

The protein localises to the endoplasmic reticulum lumen. It catalyses the reaction L-seryl-[protein] + UDP-N-acetyl-alpha-D-glucosamine = 3-O-(N-acetyl-beta-D-glucosaminyl)-L-seryl-[protein] + UDP + H(+). The catalysed reaction is L-threonyl-[protein] + UDP-N-acetyl-alpha-D-glucosamine = 3-O-(N-acetyl-beta-D-glucosaminyl)-L-threonyl-[protein] + UDP + H(+). Its function is as follows. Catalyzes the transfer of a single N-acetylglucosamine from UDP-GlcNAc to a serine or threonine residue in extracellular proteins resulting in their modification with a beta-linked N-acetylglucosamine (O-GlcNAc). Specifically glycosylates the Thr residue located between the fifth and sixth conserved cysteines of folded EGF-like domains. Involved in epithelial cell adhesion/interaction with the extracellular matrix by mediating glycosylation of proteins in the secretory pathway, such as Dumpy (Dp). The sequence is that of EGF domain-specific O-linked N-acetylglucosamine transferase (Eogt) from Drosophila melanogaster (Fruit fly).